A 189-amino-acid polypeptide reads, in one-letter code: MGVHSDDWIRQMVKKHRMIEPFEESQVRKKVDGSQVISFGLSSYGYDLRVSREFKIFTNVFNSVVDPKAFDPRSFVEMESDCCIIPPNSFALARSVEYFRIPRDVITICLGKSTYARCGIIVNVTPFEPEWEGYATLEISNTTPLPAKVYAEEGLAQVIFIQASEPCSISYAERNGKYMYQKGVTVPRL.

DCTP is bound by residues 112–117 (KSTYAR), 136–138 (TLE), Gln-157, Tyr-171, and Gln-181. Catalysis depends on Glu-138, which acts as the Proton donor/acceptor.

It belongs to the dCTP deaminase family. As to quaternary structure, homotrimer.

It catalyses the reaction dCTP + H2O + H(+) = dUTP + NH4(+). Its pathway is pyrimidine metabolism; dUMP biosynthesis; dUMP from dCTP (dUTP route): step 1/2. Its function is as follows. Catalyzes the deamination of dCTP to dUTP. The polypeptide is dCTP deaminase (Methylacidiphilum infernorum (isolate V4) (Methylokorus infernorum (strain V4))).